The chain runs to 379 residues: Cytochrome b (379 aa).

Helical transmembrane passes span 33 to 53 (FGSLLGTCLVIQILTGLFLAM), 77 to 98 (WLIRYLHANGASMFFICLFIHV), 113 to 133 (WNIGIILFLTTMATAFVGYVL), and 178 to 198 (FFAFHFILPFIIAAFTLVHLL). Heme b-binding residues include H83 and H97. Residues H182 and H196 each coordinate heme b. H201 is a binding site for a ubiquinone. The next 4 helical transmembrane spans lie at 226-246 (TKDLLGIFLLLLALMILTLFF), 288-308 (LGGVLALILSILILATFPLLN), 320-340 (ITQTIYWIFIANLLVLTWIGG), and 347-367 (FTTIGQIASITYFAIIIILIP).

Belongs to the cytochrome b family. In terms of assembly, the cytochrome bc1 complex contains 11 subunits: 3 respiratory subunits (MT-CYB, CYC1 and UQCRFS1), 2 core proteins (UQCRC1 and UQCRC2) and 6 low-molecular weight proteins (UQCRH/QCR6, UQCRB/QCR7, UQCRQ/QCR8, UQCR10/QCR9, UQCR11/QCR10 and a cleavage product of UQCRFS1). This cytochrome bc1 complex then forms a dimer. It depends on heme b as a cofactor.

It localises to the mitochondrion inner membrane. Component of the ubiquinol-cytochrome c reductase complex (complex III or cytochrome b-c1 complex) that is part of the mitochondrial respiratory chain. The b-c1 complex mediates electron transfer from ubiquinol to cytochrome c. Contributes to the generation of a proton gradient across the mitochondrial membrane that is then used for ATP synthesis. The protein is Cytochrome b (MT-CYB) of Akodon azarae (Azara's grass mouse).